A 92-amino-acid polypeptide reads, in one-letter code: N(2)-fixation sustaining protein CowN (92 aa).

This sequence belongs to the CowN family.

Is required to sustain N(2)-dependent growth in the presence of low levels of carbon monoxide (CO). Probably acts by protecting the N(2) fixation ability of the nitrogenase complex, which is inactivated in the presence of CO. In Rhodobacter capsulatus (strain ATCC BAA-309 / NBRC 16581 / SB1003), this protein is N(2)-fixation sustaining protein CowN.